We begin with the raw amino-acid sequence, 623 residues long: MQCIAFHQFASSSSLPIWSSIDNRFTPKTSITSISKPKPKLKSKSNLKSRSRSSTCYPIQCTVVDNPSSTITNNSDRRSANYGPPIWSFDFVQSLPIQYKGESYTSRLNKLEKDVKRMLIGVENSLAQLELIDTIQRLGISYRFENEIISILKEKFTNNNNNPNPINYDLYATALQFRLLRQYGFEVPQEIFNNFKNHKTGEFKANISNDIMGALGLYEASFHGKKGESILEEARIFTTKCLKKYKLMSSSNNNNMTLISLLVNHALEMPLQWRITRSEAKWFIEEIYERKQDMNPTLLEFAKLDFNMLQSTYQEELKVLSRWWKDSKLGEKLPFVRDRLVECFLWQVGVRFEPQFSYFRIMDTKLYVLLTIIDDMHDIYGTLEELQLFTNALQRWDLKELDKLPDYMKTAFYFTYNFTNELAFDVLQEHGFVHIEYFKKLMVELCKHHLQEAKWFYSGYKPTLQEYVENGWLSVGGQVILMHAYFAFTNPVTKEALECLKDGHPNIVRHASIILRLADDLGTLSDELKRGDVPKSIQCYMHDTGASEDEAREHIKYLISESWKEMNNEDGNINSFFSNEFVQVKQNLGRASQMIYQYGDGHASQNNLSKERVLGLIITPIPM.

The transit peptide at 1–60 (MQCIAFHQFASSSSLPIWSSIDNRFTPKTSITSISKPKPKLKSKSNLKSRSRSSTCYPIQ) directs the protein to the chloroplast. The disordered stretch occupies residues 29 to 52 (TSITSISKPKPKLKSKSNLKSRSR). Residues 37–51 (PKPKLKSKSNLKSRS) show a composition bias toward basic residues. Residues Arg-337, Asp-374, Asp-378, Arg-516, and Asp-519 each coordinate (2E)-geranyl diphosphate. Positions 374 and 378 each coordinate Mg(2+). A DDXXD motif motif is present at residues 374 to 378 (DDMHD). Residues Asp-519, Thr-523, and Glu-527 each coordinate Mg(2+).

It belongs to the terpene synthase family. Tpsb subfamily. The cofactor is Mg(2+). Mn(2+) is required as a cofactor. It depends on K(+) as a cofactor. As to expression, trichome.

Its subcellular location is the plastid. It is found in the chloroplast. The catalysed reaction is (2E)-geranyl diphosphate = (4S)-limonene + diphosphate. The enzyme catalyses (2E)-geranyl diphosphate = terpinolene + diphosphate. It carries out the reaction (2E)-geranyl diphosphate = (1R,5R)-alpha-pinene + diphosphate. It catalyses the reaction (2E)-geranyl diphosphate = (1R,5R)-beta-pinene + diphosphate. The catalysed reaction is (2E)-geranyl diphosphate = beta-myrcene + diphosphate. The enzyme catalyses (2E)-geranyl diphosphate = (4R)-limonene + diphosphate. It functions in the pathway secondary metabolite biosynthesis; terpenoid biosynthesis. It participates in terpene metabolism; (4S)-limonene biosynthesis; (4S)-limonene from geranyl diphosphate: step 1/1. Its function is as follows. Involved in monoterpene (C10) olefins biosynthesis, constituants of cannabinoids and terpenoids-rich resins. Catalyzes mainly the conversion of (2E)-geranyl diphosphate to (-)-limonene, and also produces minor products such as (+)-limonene, (+)-alpha-pinene, terpinolene, (+)-beta-pinene and beta-myrcene. The sequence is that of (-)-limonene synthase TPS1, chloroplastic from Cannabis sativa (Hemp).